The following is a 216-amino-acid chain: Uracil phosphoribosyltransferase (216 aa).

Residues 29 to 30 and Arg-37 each bind CTP; that span reads RK. 30-34 contributes to the GTP binding site; that stretch reads KNLVR. Residue Arg-80 coordinates 5-phospho-alpha-D-ribose 1-diphosphate. Residue 87–96 participates in CTP binding; the sequence is EGLLKAFPKA. Residues Arg-105 and 140–148 contribute to the 5-phospho-alpha-D-ribose 1-diphosphate site; that span reads DPMIATAST. Residues Ile-203 and 208-210 each bind uracil; that span reads GDA. Asp-209 serves as a coordination point for 5-phospho-alpha-D-ribose 1-diphosphate.

Belongs to the UPRTase family. Homotetramer. Requires Mg(2+) as cofactor.

The enzyme catalyses UMP + diphosphate = 5-phospho-alpha-D-ribose 1-diphosphate + uracil. It functions in the pathway pyrimidine metabolism; UMP biosynthesis via salvage pathway; UMP from uracil: step 1/1. With respect to regulation, allosterically activated by GTP. Inhibited by CTP and UMP in combination. Its function is as follows. Catalyzes the conversion of uracil and 5-phospho-alpha-D-ribose 1-diphosphate (PRPP) to UMP and diphosphate. This chain is Uracil phosphoribosyltransferase (upp), found in Saccharolobus solfataricus (strain ATCC 35092 / DSM 1617 / JCM 11322 / P2) (Sulfolobus solfataricus).